The chain runs to 233 residues: 7-cyano-7-deazaguanine synthase (233 aa).

7-17 serves as a coordination point for ATP; the sequence is CSGGLDSVSLA. Zn(2+) contacts are provided by C185, C193, C196, and C199.

It belongs to the QueC family. The cofactor is Zn(2+).

It catalyses the reaction 7-carboxy-7-deazaguanine + NH4(+) + ATP = 7-cyano-7-deazaguanine + ADP + phosphate + H2O + H(+). It functions in the pathway purine metabolism; 7-cyano-7-deazaguanine biosynthesis. In terms of biological role, catalyzes the ATP-dependent conversion of 7-carboxy-7-deazaguanine (CDG) to 7-cyano-7-deazaguanine (preQ(0)). The protein is 7-cyano-7-deazaguanine synthase of Ruegeria sp. (strain TM1040) (Silicibacter sp.).